We begin with the raw amino-acid sequence, 194 residues long: Molybdenum cofactor guanylyltransferase (194 aa).

Residues 12–14 (LAG), Lys-25, Asn-53, Asp-70, and Asp-100 each bind GTP. Asp-100 provides a ligand contact to Mg(2+).

The protein belongs to the MobA family. As to quaternary structure, monomer. Mg(2+) serves as cofactor.

It localises to the cytoplasm. It carries out the reaction Mo-molybdopterin + GTP + H(+) = Mo-molybdopterin guanine dinucleotide + diphosphate. Its function is as follows. Transfers a GMP moiety from GTP to Mo-molybdopterin (Mo-MPT) cofactor (Moco or molybdenum cofactor) to form Mo-molybdopterin guanine dinucleotide (Mo-MGD) cofactor. The chain is Molybdenum cofactor guanylyltransferase from Photobacterium profundum (strain SS9).